The chain runs to 1454 residues: Probable cleavage and polyadenylation specificity factor subunit 1 (1454 aa).

The tract at residues 736 to 765 (KQSNTRKRKRLGHDAIQSSRGGEQSDAIDP) is disordered.

The protein belongs to the CPSF1 family. In terms of assembly, CPSF is a heterotetramer composed of four distinct subunits 160 (cpsf-1), 100 (cpsf-2), 70 (cpsf-3), and 30 kDa (cpsf-4).

The protein localises to the nucleus. Functionally, CPSF plays a key role in pre-mRNA 3'-end formation, recognizing the AAUAAA signal sequence and interacting with poly(A)polymerase and other factors to bring about cleavage and poly(A) addition. This subunit is involved in the RNA recognition step of the polyadenylation reaction. In Caenorhabditis elegans, this protein is Probable cleavage and polyadenylation specificity factor subunit 1 (cpsf-1).